A 274-amino-acid polypeptide reads, in one-letter code: Diaminopimelate epimerase (274 aa).

Asn-11, Gln-44, and Asn-64 together coordinate substrate. Catalysis depends on Cys-73, which acts as the Proton donor. Substrate-binding positions include 74-75 (GN), Asn-157, Asn-190, and 208-209 (ER). The active-site Proton acceptor is the Cys-217. 218–219 (GS) contributes to the substrate binding site.

It belongs to the diaminopimelate epimerase family. As to quaternary structure, homodimer.

The protein resides in the cytoplasm. The catalysed reaction is (2S,6S)-2,6-diaminopimelate = meso-2,6-diaminopimelate. It functions in the pathway amino-acid biosynthesis; L-lysine biosynthesis via DAP pathway; DL-2,6-diaminopimelate from LL-2,6-diaminopimelate: step 1/1. In terms of biological role, catalyzes the stereoinversion of LL-2,6-diaminopimelate (L,L-DAP) to meso-diaminopimelate (meso-DAP), a precursor of L-lysine and an essential component of the bacterial peptidoglycan. The protein is Diaminopimelate epimerase of Pectobacterium carotovorum subsp. carotovorum (strain PC1).